Consider the following 138-residue polypeptide: Transcription antitermination protein NusB (138 aa).

It belongs to the NusB family.

Functionally, involved in transcription antitermination. Required for transcription of ribosomal RNA (rRNA) genes. Binds specifically to the boxA antiterminator sequence of the ribosomal RNA (rrn) operons. This chain is Transcription antitermination protein NusB, found in Coxiella burnetii (strain CbuK_Q154) (Coxiella burnetii (strain Q154)).